The sequence spans 225 residues: Uridylate kinase (225 aa).

ATP is bound at residue glycine 9–serine 10. Residue glycine 46 coordinates UMP. Residues glycine 47 and arginine 51 each contribute to the ATP site. Residues aspartate 67 and threonine 115 to threonine 121 each bind UMP. ATP contacts are provided by threonine 141, asparagine 142, tyrosine 147, and aspartate 150.

Belongs to the UMP kinase family. In terms of assembly, homohexamer.

Its subcellular location is the cytoplasm. The enzyme catalyses UMP + ATP = UDP + ADP. It functions in the pathway pyrimidine metabolism; CTP biosynthesis via de novo pathway; UDP from UMP (UMPK route): step 1/1. With respect to regulation, inhibited by UTP. Catalyzes the reversible phosphorylation of UMP to UDP. This chain is Uridylate kinase, found in Methanococcus aeolicus (strain ATCC BAA-1280 / DSM 17508 / OCM 812 / Nankai-3).